We begin with the raw amino-acid sequence, 143 residues long: Large ribosomal subunit protein uL11 (143 aa).

This sequence belongs to the universal ribosomal protein uL11 family. As to quaternary structure, part of the ribosomal stalk of the 50S ribosomal subunit. Interacts with L10 and the large rRNA to form the base of the stalk. L10 forms an elongated spine to which L12 dimers bind in a sequential fashion forming a multimeric L10(L12)X complex. Post-translationally, one or more lysine residues are methylated.

Functionally, forms part of the ribosomal stalk which helps the ribosome interact with GTP-bound translation factors. This Bifidobacterium longum (strain DJO10A) protein is Large ribosomal subunit protein uL11.